The primary structure comprises 674 residues: Probable copper-transporting P-type ATPase B (674 aa).

A disordered region spans residues 1 to 22; sequence MNHSNQMHHDNHESHNHHSGHA. Residues 7-16 show a composition bias toward basic and acidic residues; sequence MHHDNHESHN. Transmembrane regions (helical) follow at residues 32–52, 57–77, 95–115, 127–147, 284–304, and 315–335; these read FFVSLIFAIPIILLSPLMGVN, FTFPGSEWVVLILSTILFFYG, GMMTLVALGISVAYIYSLYAF, TMDFFWELATLILIMLLGHWI, GYLFYFAVSVGVISFIVWMLI, and LVTVLVIACPHALGLAIPLVT. Asp-367 functions as the 4-aspartylphosphate intermediate in the catalytic mechanism. Positions 565 and 569 each coordinate Mg(2+). 2 helical membrane-spanning segments follow: residues 623 to 645 and 649 to 671; these read LWWGAGYNIVAVPLAAGILAFIG and SPAIGAILMSLSTVIVAINAFTL.

The protein belongs to the cation transport ATPase (P-type) (TC 3.A.3) family. Type IB subfamily.

It is found in the cell membrane. It catalyses the reaction Cu(+)(in) + ATP + H2O = Cu(+)(out) + ADP + phosphate + H(+). Functionally, involved in copper transport. This is Probable copper-transporting P-type ATPase B (copB) from Staphylococcus epidermidis (strain ATCC 35984 / DSM 28319 / BCRC 17069 / CCUG 31568 / BM 3577 / RP62A).